Consider the following 525-residue polypeptide: Protein BSP1 (525 aa).

Disordered regions lie at residues Ile-21–Glu-40, Gln-98–Met-262, Leu-285–Lys-325, and Asp-339–Ile-525. The segment covering Ile-110–Ser-122 has biased composition (basic and acidic residues). Polar residues predominate over residues Asn-148–Ala-162. 3 stretches are compositionally biased toward basic and acidic residues: residues Tyr-171 to Val-182, Asp-201 to Lys-223, and Lys-230 to Arg-242. The span at Gln-251–Lys-261 shows a compositional bias: polar residues. A compositionally biased stretch (low complexity) spans Leu-285 to Glu-297. Composition is skewed to basic and acidic residues over residues Lys-314–Lys-325 and Asp-339–Phe-354. The span at Gln-382–Lys-398 shows a compositional bias: polar residues. Positions Glu-447–Pro-456 are enriched in acidic residues. Residues Asn-510–Ile-525 show a composition bias toward basic residues.

It localises to the cell membrane. Its subcellular location is the cytoplasm. The protein resides in the cytoskeleton. It is found in the actin patch. In terms of biological role, cortical patch protein involved in endocytosis. In Candida glabrata (strain ATCC 2001 / BCRC 20586 / JCM 3761 / NBRC 0622 / NRRL Y-65 / CBS 138) (Yeast), this protein is Protein BSP1 (BSP1).